Here is a 331-residue protein sequence, read N- to C-terminus: Laforin (331 aa).

A CBM20 domain is found at 1 to 124; the sequence is MRFRFGVVVP…NNLVDGVYCL (124 aa). S25 carries the post-translational modification Phosphoserine; by AMPK. Residues W32, K87, 103-107, D197, D235, and R241 each bind substrate; that span reads GPHHD. A Tyrosine-protein phosphatase domain is found at 156-323; that stretch reads HYSRILPNIW…EEDFFQKFGK (168 aa). The active-site Phosphocysteine intermediate is the C266. The Glucan phosphatase signature motif CXAGXGR motif lies at 266–272; sequence CNAGVGR. Substrate contacts are provided by residues 267-272 and Y304; that span reads NAGVGR.

This sequence belongs to the protein-tyrosine phosphatase family. Homodimer. Interacts with itself. Interacts with PPP1R3B, PPP1R3C, PPP1R3D, HIRIP5, and EPM2AIP1. Binds glycogen and Lafora bodies. Interacts with NHLRC1/malin (via the NHL repeats). Forms a complex with NHLRC1/malin and HSP70. Interacts with PPP1R3D; in the presence of NHLC1/malin the interaction leads to ubiquitination and autophagic degradation of PPP1R3D. Interacts (via the phosphatase domain) with MAPT/Tau; the interaction dephosphorylates MAPT. Interacts with PRDM8. Post-translationally, polyubiquitinated by NHLRC1/malin. Phosphorylation on Ser-25 by AMPK affects the phosphatase activity of the enzyme and its ability to homodimerize and interact with NHLRC1, PPP1R3C or PRKAA2.

It localises to the cytoplasm. The protein localises to the endoplasmic reticulum membrane. Its subcellular location is the cell membrane. The enzyme catalyses O-phospho-L-tyrosyl-[protein] + H2O = L-tyrosyl-[protein] + phosphate. It catalyses the reaction O-phospho-L-seryl-[protein] + H2O = L-seryl-[protein] + phosphate. The catalysed reaction is O-phospho-L-threonyl-[protein] + H2O = L-threonyl-[protein] + phosphate. Functionally, plays an important role in preventing glycogen hyperphosphorylation and the formation of insoluble aggregates, via its activity as glycogen phosphatase, and by promoting the ubiquitination of proteins involved in glycogen metabolism via its interaction with the E3 ubiquitin ligase NHLRC1/malin. Dephosphorylates phosphotyrosine and synthetic substrates, such as para-nitrophenylphosphate (pNPP), and has low activity with phosphoserine and phosphothreonine substrates (in vitro). Has also been shown to dephosphorylate MAPT. Shows strong phosphatase activity towards complex carbohydrates in vitro, avoiding glycogen hyperphosphorylation which is associated with reduced branching and formation of insoluble aggregates. Forms a complex with NHLRC1/malin and HSP70, which suppresses the cellular toxicity of misfolded proteins by promoting their degradation through the ubiquitin-proteasome system (UPS). Acts as a scaffold protein to facilitate PPP1R3C/PTG ubiquitination by NHLRC1/malin. Also promotes proteasome-independent protein degradation through the macroautophagy pathway. This chain is Laforin (EPM2A), found in Canis lupus familiaris (Dog).